Reading from the N-terminus, the 592-residue chain is MKNEIQDGLGSALILVAKNHGIDIRLLDQAIEIERCKDPENGDFASNIALKYAKVFKMKPRQLADELVVSVPLMDSVAGMEVAGPGFINIRLSRESITAVLENVVAKKERYGCFENPNARKILVEFVSANPTGPLHVGHGRGAAYGDSLSRLLIANGHQVDREYYINDFGRQMDILALSVYWRYVQECGIGVALPKGIYQGDYVIDIAKKLKEKEGKRLAYPVNEWAPDYPQTWTQEQVDNGDRDRWIDGAIAGLKEKLGQKEYRGVFDLALSMELDDIRGDLEEFGVFFDRWFSERSMSENDMINNALKKVDEAGYLYEKDGAVWFKSTAFGDEKDRVVRRKNGMTTYFSSDISYHFDKYNRGYDQMIDILGADHHGYMARVRASLAALGLDPEKLVIALVQFAVLYKGGEKMQMSTRSGEFVTLRDLREHVGADAARFFYVMRKPEQHLDFDLDLAESNSKDNPFYYVEYAHARCCGMLNKAEEEGYEFSPEAALKCRNALVEPEETALISELHRYPEVVIAAGKQMAPHQVIIYLKELATRWHHYYDVGHKVLHEDEEIRNARLLLTWAVRQVLRNALAIIGVQARERM.

The 'HIGH' region signature appears at 129–139 (ANPTGPLHVGH).

It belongs to the class-I aminoacyl-tRNA synthetase family. As to quaternary structure, monomer.

The protein localises to the cytoplasm. It catalyses the reaction tRNA(Arg) + L-arginine + ATP = L-arginyl-tRNA(Arg) + AMP + diphosphate. This is Arginine--tRNA ligase from Dichelobacter nodosus (strain VCS1703A).